The sequence spans 360 residues: Heme A synthase (360 aa).

8 helical membrane passes run 29-49 (WLFL…ATRL), 111-131 (FLGR…WWTG), 139-159 (LGLV…WIMV), 175-195 (LAAH…LAAG), 210-230 (LTAL…GLVA), 269-289 (VALV…LALL), 309-329 (ALAG…LLAV), and 330-350 (PLWA…MAVA). Heme is bound at residue H276. Residue H337 coordinates heme.

Belongs to the COX15/CtaA family. Type 2 subfamily. In terms of assembly, interacts with CtaB. Heme b is required as a cofactor.

The protein resides in the cell membrane. It catalyses the reaction Fe(II)-heme o + 2 A + H2O = Fe(II)-heme a + 2 AH2. Its pathway is porphyrin-containing compound metabolism; heme A biosynthesis; heme A from heme O: step 1/1. Functionally, catalyzes the conversion of heme O to heme A by two successive hydroxylations of the methyl group at C8. The first hydroxylation forms heme I, the second hydroxylation results in an unstable dihydroxymethyl group, which spontaneously dehydrates, resulting in the formyl group of heme A. The chain is Heme A synthase from Methylobacterium sp. (strain 4-46).